Reading from the N-terminus, the 113-residue chain is Pro-corazonin (113 aa).

Positions 1-19 (MATNITMFLIVITLTSVAA) are cleaved as a signal peptide. Gln-20 is subject to Pyrrolidone carboxylic acid. The residue at position 30 (Asn-30) is an Asparagine amide. Residues 74 to 96 (LGPCDTSKTRSTTNPSDTNTSAV) are disordered. Over residues 82–96 (TRSTTNPSDTNTSAV) the composition is skewed to polar residues.

The protein belongs to the corazonin family. Four pairs of lateral neurosecretory cells in the brains of late instar larvae, pupae and adults.

Its subcellular location is the secreted. Cardioactive peptide. Corazonin is probably involved in the physiological regulation of the heart beat. The protein is Pro-corazonin of Galleria mellonella (Greater wax moth).